The chain runs to 353 residues: Peroxisome assembly protein 12-A (353 aa).

At 1–19 (MAERGAHITTTSASDDRPS) the chain is on the peroxisomal matrix side. The chain crosses the membrane as a helical span at residues 20 to 47 (IFEVVAQESLMAAARPALHHIVKVLAES). Residues 48–51 (NPSR) are Cytoplasmic-facing. The helical transmembrane segment at 52–76 (YGTLWRWFDELYTLLDWLLQQHYLS) threads the bilayer. Over 77–104 (WASASFSENFYGLKRITLGKEVGQRNLP) the chain is Peroxisomal matrix. The chain crosses the membrane as a helical span at residues 105-134 (RKEYWKSLLLLVLIPYLRVKLEKIVNRLRE). Topologically, residues 135 to 139 (EQDYS) are cytoplasmic. Residues 140–178 (IQNPTSFHKRCYKAILASYPFVKLGWEAWFLFYQLRYIL) form a helical membrane-spanning segment. At 179–243 (WNGKNHSPLL…LGAVALSVSS (65 aa)) the chain is on the peroxisomal matrix side. Residues 244 to 271 (SLSLGVFFLQFLDWWYSAENQETLKSLN) traverse the membrane as a helical segment. At 272 to 353 (NLPVPPPPIH…HLIKLYTPDG (82 aa)) the chain is on the cytoplasmic side. Zn(2+)-binding residues include Cys298, Cys301, Cys319, and Cys322. The RING-type; degenerate zinc-finger motif lies at 298-337 (CPLCRKVRVNDTALGTSGYVFCYRCAYYYVKTHQRCPVSG).

It belongs to the pex2/pex10/pex12 family. As to quaternary structure, component of the PEX2-PEX10-PEX12 retrotranslocation channel.

The protein localises to the peroxisome membrane. The protein operates within protein modification; protein ubiquitination. In terms of biological role, component of a retrotranslocation channel required for peroxisome organization by mediating export of the PEX5 receptor from peroxisomes to the cytosol, thereby promoting PEX5 recycling. The retrotranslocation channel is composed of PEX2, PEX10 and PEX12; each subunit contributing transmembrane segments that coassemble into an open channel that specifically allows the passage of PEX5 through the peroxisomal membrane. PEX12 also regulates PEX5 recycling by activating the E3 ubiquitin-protein ligase activity of PEX10. When PEX5 recycling is compromised, PEX12 stimulates PEX10-mediated polyubiquitination of PEX5, leading to its subsequent degradation. This is Peroxisome assembly protein 12-A from Xenopus laevis (African clawed frog).